We begin with the raw amino-acid sequence, 226 residues long: MNDPILSVEQVSKSFCCATERIQILSDVSFSVPRAVKVAITGESGCGKSTLLNIIGGMEHADSGIVRVLSCDVLTLHEHALTEYRRQFLGLVFQFHHLLRDFTALENVMLPGLIAGKSYREVRARAYELLEKVRVVQRAHHFPAQMSGGERQRTAVARALINDPTLILADEPTGNLDPKNALIVQDLLFSLTEEYQKTLLIVTHDPRIASMTDYRYQLQQGSLIRI.

The ABC transporter domain maps to 6–226; it reads LSVEQVSKSF…QLQQGSLIRI (221 aa). Position 42–49 (42–49) interacts with ATP; the sequence is GESGCGKS.

It belongs to the ABC transporter superfamily. Lipoprotein translocase (TC 3.A.1.125) family. The complex is composed of two ATP-binding proteins (LolD) and two transmembrane proteins (LolC and LolE).

It is found in the cell inner membrane. Part of the ABC transporter complex LolCDE involved in the translocation of mature outer membrane-directed lipoproteins, from the inner membrane to the periplasmic chaperone, LolA. Responsible for the formation of the LolA-lipoprotein complex in an ATP-dependent manner. In Treponema pallidum (strain Nichols), this protein is Lipoprotein-releasing system ATP-binding protein LolD.